Reading from the N-terminus, the 172-residue chain is RNA pyrophosphohydrolase (172 aa).

The 144-residue stretch at 6-149 (GYRPNVGIIL…KRDVYRMALK (144 aa)) folds into the Nudix hydrolase domain. The Nudix box motif lies at 38 to 59 (GGIKYGESPEQAMYRELMEEVG).

Belongs to the Nudix hydrolase family. RppH subfamily. Requires a divalent metal cation as cofactor.

In terms of biological role, accelerates the degradation of transcripts by removing pyrophosphate from the 5'-end of triphosphorylated RNA, leading to a more labile monophosphorylated state that can stimulate subsequent ribonuclease cleavage. This Methylobacillus flagellatus (strain ATCC 51484 / DSM 6875 / VKM B-1610 / KT) protein is RNA pyrophosphohydrolase.